Here is an 803-residue protein sequence, read N- to C-terminus: Leucine--tRNA ligase (803 aa).

The 'HIGH' region signature appears at 40-51; it reads PYPSGQGLHVGH. Residues 575-579 carry the 'KMSKS' region motif; it reads KMSKS. K578 serves as a coordination point for ATP.

This sequence belongs to the class-I aminoacyl-tRNA synthetase family.

It localises to the cytoplasm. It carries out the reaction tRNA(Leu) + L-leucine + ATP = L-leucyl-tRNA(Leu) + AMP + diphosphate. The polypeptide is Leucine--tRNA ligase (Lacticaseibacillus paracasei (strain ATCC 334 / BCRC 17002 / CCUG 31169 / CIP 107868 / KCTC 3260 / NRRL B-441) (Lactobacillus paracasei)).